Reading from the N-terminus, the 476-residue chain is MSQPAFKIIIVGCSVTGLTLAHCLDKLGVEYTILEKRSAVVLQEGASVAVMPNGGRILDQLGLYDAFEKATVPLDLTDAYLPDQDFRFTSDYPRRVLATFGYPVAFMERRGLLEILYDGIADKSKIHLNKGVTHVEQNDDGAKVHTEDGEVYEGDIVVGADGIHSKTLREMWRMMGEPVVNGIAQSESQNMSVAFSCVFGISHDVPELQPGEQILRMCNGSTIFVMGSKGVVFWFIVTQLNRRYEYHDAPRYTTEEAAAFCEARKDAEIKEGVTFECIWRKQHVFNMLPLQESLFQTWSHGRVVCIGDSVHKMTINLGQGANCAIEDVTVLCNMLRAFLAEKREKKPSYSEIDTLLRRFNKEHLPRASTIVETSRLTTRVHAQVGISQRIMTRWVVPYFGKFLQGKPLGLIASGPVLDFLPLKRASYPGWERYRVKKSSRGAGFWITAFLSLSLLAVAATMYGWGNSQIWADWNIL.

A signal peptide spans Met1–Ala21. Positions 35, 49, and 109 each coordinate FAD. 2 N-linked (GlcNAc...) asparagine glycosylation sites follow: Asn190 and Asn219. FAD contacts are provided by Asp308 and Ala321. A helical membrane pass occupies residues Gly441–Met461.

It belongs to the paxM FAD-dependent monooxygenase family. FAD is required as a cofactor.

Its subcellular location is the membrane. It participates in secondary metabolite biosynthesis; terpenoid biosynthesis. In terms of biological role, FAD-dependent monooxygenase; part of the gene cluster that mediates the biosynthesis of the diterpenoid pyrones subglutinols A and B. The first step of the pathway is the synthesis of the alpha-pyrone moiety by the polyketide synthase dpasA via condensation of one acetyl-CoA starter unit with 3 malonyl-CoA units and 2 methylations. The alpha-pyrone is then combined with geranylgeranyl pyrophosphate (GGPP) formed by the GGPP synthase dpasD through the action of the prenyltransferase dpasC to yield a linear alpha-pyrone diterpenoid. Subsequent steps in the diterpenoid pyrone biosynthetic pathway involve the decalin core formation, which is initiated by the epoxidation of the C10-C11 olefin by the FAD-dependent oxidoreductase dpasE, and is followed by a cyclization cascade catalyzed by the terpene cyclase dpasB. The FAD-linked oxidoreductase dpasF is then involved in tetrahydrofuran (THF) ring formation at the C5 unit to complete the formation of subglutinols A and B. DpasF possesses also an additional catalytic ability of multi-step oxidations to generate a new DDP analog with an enone system at the C5 named FDDP A. This chain is FAD-dependent monooxygenase dpasE, found in Apiospora sacchari (Arthrinium sacchari).